The primary structure comprises 2564 residues: Histone-lysine N-methyltransferase SETD2 (2564 aa).

The span at M1–K11 shows a compositional bias: pro residues. Positions M1–A30 are disordered. Basic and acidic residues predominate over residues D17–A30. S131 bears the Phosphoserine mark. 3 disordered regions span residues S180–P211, N272–K561, and P607–T626. Pro residues predominate over residues P187–A197. The span at Q198–P207 shows a compositional bias: low complexity. Basic and acidic residues predominate over residues S278–E290. A phosphoserine mark is found at S321, S323, and S344. 4 stretches are compositionally biased toward basic and acidic residues: residues R335–R400, R421–R432, P439–K467, and S479–K528. Residue K359 forms a Glycyl lysine isopeptide (Lys-Gly) (interchain with G-Cter in SUMO2) linkage. Phosphoserine is present on S422. A phosphoserine mark is found at S532, S614, and S624. The span at A616–P625 shows a compositional bias: polar residues. T626 is modified (phosphothreonine). A Glycyl lysine isopeptide (Lys-Gly) (interchain with G-Cter in SUMO2) cross-link involves residue K637. Residues S698, S708, S744, and S754 each carry the phosphoserine modification. A Glycyl lysine isopeptide (Lys-Gly) (interchain with G-Cter in SUMO2) cross-link involves residue K776. 5 disordered regions span residues E964 to D995, E1036 to W1101, L1133 to T1233, Q1264 to Q1352, and L1393 to A1443. The segment covering P971–D994 has biased composition (basic and acidic residues). Positions S1045–D1058 are enriched in acidic residues. Residues S1084–R1095 are compositionally biased toward low complexity. Residue S1098 is modified to Phosphoserine. Residues H1162–T1171 are compositionally biased toward polar residues. Positions S1172 to K1191 are enriched in basic and acidic residues. Residues K1215–R1225 show a composition bias toward polar residues. S1228 carries the post-translational modification Phosphoserine. Residues E1265–S1276 show a composition bias toward polar residues. The span at L1393–P1403 shows a compositional bias: basic and acidic residues. 3 positions are modified to phosphoserine: S1413, S1415, and S1417. Residues D1418–S1714 form an interaction with TUBA1A region. Positions L1421–V1431 are enriched in basic and acidic residues. Positions I1494–Q1548 constitute an AWS domain. Residues C1499, C1501, C1516, C1520, C1529, C1533, and C1539 each coordinate Zn(2+). The region spanning A1550 to Q1667 is the SET domain. S-adenosyl-L-methionine-binding positions include K1560–W1562, H1603–Y1605, and N1628–H1629. Zn(2+) is bound at residue C1631. One can recognise a Post-SET domain in the interval E1674–G1690. Position 1676 (Q1676) interacts with S-adenosyl-L-methionine. C1678 is a Zn(2+) binding site. F1679 lines the S-adenosyl-L-methionine pocket. Residues C1680 and C1685 each coordinate Zn(2+). 3 positions are modified to phosphoserine: S1696, S1844, and S1845. The interval K1831–T1872 is disordered. Residues S1844–E1867 are compositionally biased toward polar residues. Phosphothreonine occurs at positions 1853 and 1872. Phosphoserine is present on S1888. A disordered region spans residues E1921–Q2142. Low complexity predominate over residues Q1924–E1935. S1952 is modified (phosphoserine). Residues I1960–E1972 are compositionally biased toward basic and acidic residues. Over residues P1973 to V1990 the composition is skewed to acidic residues. Residues S1980, S1988, and S1995 each carry the phosphoserine modification. 3 stretches are compositionally biased toward basic and acidic residues: residues E1991–D2004, D2014–G2046, and R2059–K2072. S2080 and S2082 each carry phosphoserine. 2 stretches are compositionally biased toward basic and acidic residues: residues R2090 to D2100 and K2111 to Q2135. Positions S2117 to M2146 form a coiled coil. The interval Q2137–P2366 is low charge region. The 34-residue stretch at I2389–W2422 folds into the WW domain. Residues L2439–E2465 are disordered. The tract at residues T2457–E2564 is interaction with POLR2A.

It belongs to the class V-like SAM-binding methyltransferase superfamily. Histone-lysine methyltransferase family. SET2 subfamily. As to quaternary structure, specifically interacts with hyperphosphorylated C-terminal domain (CTD) of RNA polymerase II large subunit (POLR2A): binds to CTD heptad repeats doubly phosphorylated on 'Ser-2' and 'Ser-5' of each heptad. Interacts with HTT. Interacts with IWS1. Interacts with p53/TP53; leading to regulate p53/TP53 target genes. Component of a complex with HNRNPL. Interacts with TUBA1A; the interaction is independent on alpha-tubulin acetylation on 'Lys-40'. Interacts with STAT1. May be automethylated. As to expression, ubiquitously expressed.

It localises to the nucleus. Its subcellular location is the chromosome. The catalysed reaction is L-lysyl(36)-[histone H3] + 3 S-adenosyl-L-methionine = N(6),N(6),N(6)-trimethyl-L-lysyl(36)-[histone H3] + 3 S-adenosyl-L-homocysteine + 3 H(+). The enzyme catalyses L-lysyl-[protein] + S-adenosyl-L-methionine = N(6)-methyl-L-lysyl-[protein] + S-adenosyl-L-homocysteine + H(+). It carries out the reaction L-lysyl-[protein] + 3 S-adenosyl-L-methionine = N(6),N(6),N(6)-trimethyl-L-lysyl-[protein] + 3 S-adenosyl-L-homocysteine + 3 H(+). Specifically inhibited by sinefungin derivatives. N-propyl sinefungin (Pr-SNF) interacts preferentially with SETD2. In terms of biological role, histone methyltransferase that specifically trimethylates 'Lys-36' of histone H3 (H3K36me3) using dimethylated 'Lys-36' (H3K36me2) as substrate. It is capable of trimethylating unmethylated H3K36 (H3K36me0) in vitro. Represents the main enzyme generating H3K36me3, a specific tag for epigenetic transcriptional activation. Plays a role in chromatin structure modulation during elongation by coordinating recruitment of the FACT complex and by interacting with hyperphosphorylated POLR2A. Acts as a key regulator of DNA mismatch repair in G1 and early S phase by generating H3K36me3, a mark required to recruit MSH6 subunit of the MutS alpha complex: early recruitment of the MutS alpha complex to chromatin to be replicated allows a quick identification of mismatch DNA to initiate the mismatch repair reaction. Required for DNA double-strand break repair in response to DNA damage: acts by mediating formation of H3K36me3, promoting recruitment of RAD51 and DNA repair via homologous recombination (HR). Acts as a tumor suppressor. H3K36me3 also plays an essential role in the maintenance of a heterochromatic state, by recruiting DNA methyltransferase DNMT3A. H3K36me3 is also enhanced in intron-containing genes, suggesting that SETD2 recruitment is enhanced by splicing and that splicing is coupled to recruitment of elongating RNA polymerase. Required during angiogenesis. Required for endoderm development by promoting embryonic stem cell differentiation toward endoderm: acts by mediating formation of H3K36me3 in distal promoter regions of FGFR3, leading to regulate transcription initiation of FGFR3. In addition to histones, also mediates methylation of other proteins, such as tubulins and STAT1. Trimethylates 'Lys-40' of alpha-tubulins such as TUBA1B (alpha-TubK40me3); alpha-TubK40me3 is required for normal mitosis and cytokinesis and may be a specific tag in cytoskeletal remodeling. Involved in interferon-alpha-induced antiviral defense by mediating both monomethylation of STAT1 at 'Lys-525' and catalyzing H3K36me3 on promoters of some interferon-stimulated genes (ISGs) to activate gene transcription. Its function is as follows. (Microbial infection) Recruited to the promoters of adenovirus 12 E1A gene in case of infection, possibly leading to regulate its expression. The protein is Histone-lysine N-methyltransferase SETD2 (SETD2) of Homo sapiens (Human).